A 486-amino-acid polypeptide reads, in one-letter code: Zinc finger chaperone ZPR1 (486 aa).

Positions 1–31 (MSEQKEDLFKPVGEAAAEVEDESIAEQNKAN) are disordered. Phosphoserine is present on S23. C4-type zinc fingers lie at residues 54 to 86 (CMNC…CPHC) and 295 to 327 (CPSC…CDHC). T407 is modified (phosphothreonine).

This sequence belongs to the ZPR1 family. Interacts with elongation factor 1-alpha.

The protein resides in the cytoplasm. It localises to the nucleus. Acts as a protein folding chaperone for elongation factor 1-alpha. In Saccharomyces cerevisiae (strain ATCC 204508 / S288c) (Baker's yeast), this protein is Zinc finger chaperone ZPR1.